The following is a 1349-amino-acid chain: Nitric oxide synthase (1349 aa).

The segment at 23–195 (AQQQQQQQQQ…QPRKMSQDYR (173 aa)) is disordered. Low complexity-rich tracts occupy residues 24 to 51 (QQQQQQQQQQLQQQQQQLQQQKAQTQQQ) and 64 to 73 (LNGNGLLSGN). The segment covering 142-159 (SGSGSGSGGGGVGVGQGA) has biased composition (gly residues). The span at 165–189 (GSCTASGKSSRELSPSPKNQQQPRK) shows a compositional bias: polar residues. Position 250 (Ser-250) interacts with (6R)-L-erythro-5,6,7,8-tetrahydrobiopterin. Residue Cys-328 participates in heme b binding. 5 residues coordinate L-arginine: Gln-391, Trp-500, Tyr-501, Glu-505, and Asn-510. Trp-591 and Phe-604 together coordinate (6R)-L-erythro-5,6,7,8-tetrahydrobiopterin. Residue Tyr-619 coordinates heme b. The segment at 641 to 661 (PRRKFNFKQIARAVKFTSKLF) is calmodulin-binding. One can recognise a Flavodoxin-like domain in the interval 671–868 (ATVLYATETG…SFRKWAPEVF (198 aa)). 814–845 (VFALGSSAYPNFCAFGQYVDNILGELGGERLL) is an FMN binding site. In terms of domain architecture, FAD-binding FR-type spans 928 to 1167 (AKAKPHNLTR…VRSALGFHLP (240 aa)). FAD contacts are provided by residues 957 to 968 (YEPGDHVGIFPA) and 1100 to 1110 (LQPRFYSISSS). Residues 1175–1193 (ILIGPGTGIAPFRSFWQEF) and 1273–1287 (GHIYVCGDVTMAEHV) each bind NADP(+).

The protein belongs to the NOS family. Requires heme b as cofactor. FAD is required as a cofactor. It depends on FMN as a cofactor.

It carries out the reaction 2 L-arginine + 3 NADPH + 4 O2 + H(+) = 2 L-citrulline + 2 nitric oxide + 3 NADP(+) + 4 H2O. Its activity is regulated as follows. Stimulated by calcium/calmodulin. Catalyzes the conversion of L-arginine to L-citrulline producing nitric oxide (NO) which is a messenger molecule with diverse functions throughout the body. Truncated isoforms (isoform 3-isoform 6) are able to form intracellular complexes with the full-length protein and serve as dominant negative inhibitors of the enzyme activity. The chain is Nitric oxide synthase (Nos) from Drosophila melanogaster (Fruit fly).